The chain runs to 645 residues: Glucans biosynthesis glucosyltransferase H (645 aa).

Residues 1 to 13 (MDGTVTPSPTTTA) show a composition bias toward polar residues. The interval 1-32 (MDGTVTPSPTTTAMPPVSALDAGTPTLPPEAP) is disordered. Transmembrane regions (helical) follow at residues 64 to 84 (LIGG…SVLW), 98 to 118 (LFVL…AGFV), 423 to 443 (APMW…GGGI), 465 to 485 (AIWI…LGYI), 504 to 524 (AVSI…VMYL), 559 to 579 (YGGL…VSPA), and 580 to 600 (LAAW…VVAL).

Belongs to the glycosyltransferase 2 family. OpgH subfamily.

The protein localises to the cell inner membrane. It participates in glycan metabolism; osmoregulated periplasmic glucan (OPG) biosynthesis. Functionally, involved in the biosynthesis of osmoregulated periplasmic glucans (OPGs). The polypeptide is Glucans biosynthesis glucosyltransferase H (Xanthomonas euvesicatoria pv. vesicatoria (strain 85-10) (Xanthomonas campestris pv. vesicatoria)).